The chain runs to 90 residues: Long neurotoxin OH-34 (90 aa).

The N-terminal stretch at 1-20 is a signal peptide; sequence KTLLLTLVVVTILCLDLGYT. 5 cysteine pairs are disulfide-bonded: cysteine 23–cysteine 41, cysteine 34–cysteine 62, cysteine 47–cysteine 51, cysteine 66–cysteine 77, and cysteine 78–cysteine 83.

It belongs to the three-finger toxin family. Long-chain subfamily. Type II alpha-neurotoxin sub-subfamily. Expressed by the venom gland.

It is found in the secreted. Functionally, binds with high affinity to muscular (alpha-1/CHRNA1) and neuronal (alpha-7/CHRNA7) nicotinic acetylcholine receptor (nAChR) and inhibits acetylcholine from binding to the receptor, thereby impairing neuromuscular and neuronal transmission. This is Long neurotoxin OH-34 from Ophiophagus hannah (King cobra).